Here is a 137-residue protein sequence, read N- to C-terminus: Large ribosomal subunit protein eL28 (137 aa).

An N-acetylserine modification is found at S2. Glycyl lysine isopeptide (Lys-Gly) (interchain with G-Cter in SUMO2) cross-links involve residues K58 and K65. Position 115 is a phosphoserine (S115).

It belongs to the eukaryotic ribosomal protein eL28 family. In terms of assembly, component of the large ribosomal subunit.

It is found in the cytoplasm. Its function is as follows. Component of the large ribosomal subunit. The ribosome is a large ribonucleoprotein complex responsible for the synthesis of proteins in the cell. This chain is Large ribosomal subunit protein eL28 (RPL28), found in Bos taurus (Bovine).